Consider the following 333-residue polypeptide: GTPase Obg (333 aa).

Residues 1–159 (MKFIDEATIT…ATVRLELKLL (159 aa)) enclose the Obg domain. The disordered stretch occupies residues 63-85 (KQFAAPNGAPGEGRQKTGKSGDD). The segment covering 75-84 (GRQKTGKSGD) has biased composition (basic and acidic residues). One can recognise an OBG-type G domain in the interval 160 to 329 (ADVGLIGLPN…LKKHLFELLC (170 aa)). GTP contacts are provided by residues 166 to 173 (GLPNAGKS), 191 to 195 (FTTLS), 213 to 216 (DIPG), 283 to 286 (NKMD), and 310 to 312 (SAA). S173 and T193 together coordinate Mg(2+).

This sequence belongs to the TRAFAC class OBG-HflX-like GTPase superfamily. OBG GTPase family. As to quaternary structure, monomer. Requires Mg(2+) as cofactor.

It localises to the cytoplasm. Its function is as follows. An essential GTPase which binds GTP, GDP and possibly (p)ppGpp with moderate affinity, with high nucleotide exchange rates and a fairly low GTP hydrolysis rate. Plays a role in control of the cell cycle, stress response, ribosome biogenesis and in those bacteria that undergo differentiation, in morphogenesis control. The chain is GTPase Obg from Desulfosudis oleivorans (strain DSM 6200 / JCM 39069 / Hxd3) (Desulfococcus oleovorans).